A 404-amino-acid polypeptide reads, in one-letter code: GTPase Obg (404 aa).

The Obg domain maps to 1 to 159; the sequence is MKFIDEARIE…RALRLELKVL (159 aa). The interval 22–43 is disordered; that stretch reads SFRREKFIPRGGPDGGDGGRGG. Positions 33-43 are enriched in gly residues; that stretch reads GPDGGDGGRGG. The OBG-type G domain occupies 160–334; sequence ADVGLLGMPN…LVFAIQDFLD (175 aa). GTP contacts are provided by residues 166-173, 191-195, 213-216, 284-287, and 315-317; these read GMPNAGKS, FTTLA, DIPG, NKLD, and SAL. Mg(2+) contacts are provided by serine 173 and threonine 193. Residues 373-404 are disordered; that stretch reads LLAEGETGTGDDGRDGNENDPADEQDTNRPNH.

Belongs to the TRAFAC class OBG-HflX-like GTPase superfamily. OBG GTPase family. Monomer. Mg(2+) is required as a cofactor.

The protein localises to the cytoplasm. In terms of biological role, an essential GTPase which binds GTP, GDP and possibly (p)ppGpp with moderate affinity, with high nucleotide exchange rates and a fairly low GTP hydrolysis rate. Plays a role in control of the cell cycle, stress response, ribosome biogenesis and in those bacteria that undergo differentiation, in morphogenesis control. This Aromatoleum aromaticum (strain DSM 19018 / LMG 30748 / EbN1) (Azoarcus sp. (strain EbN1)) protein is GTPase Obg.